The primary structure comprises 239 residues: MAVVTLAEMMEAGAHFGHQTRRWNPKMSRYIYCARNGVHIIDLVQTAICMNNAYKWTRSAARSGKRFLFVGTKKQASEVIAQEAARCGAAYVNQRWLGGMLTNWTTMRARIDRLKDLERMEGSGSIAMRPKKEAAVLRRELDRLRKYLGGLKNMRRLPDVVILVDQRRETNAVLECRKLDIPLVSMLDTNCDPDLCDVPIPCNDDAVRSVQLVLSRLSDAINEGRHGVQDQRGNDDSEG.

This sequence belongs to the universal ribosomal protein uS2 family.

It is found in the plastid. It localises to the organellar chromatophore. This chain is Small ribosomal subunit protein uS2c (rps2), found in Paulinella chromatophora.